An 88-amino-acid chain; its full sequence is Large ribosomal subunit protein eL34 (88 aa).

The protein belongs to the eukaryotic ribosomal protein eL34 family.

This chain is Large ribosomal subunit protein eL34, found in Methanobrevibacter smithii (strain ATCC 35061 / DSM 861 / OCM 144 / PS).